The following is a 221-amino-acid chain: Lysine N-acyltransferase MbtK (221 aa).

A disordered region spans residues 1–34 (MSDAPAESAPAQIDPAQTDPAEQPVQILPRERSD). His-141 is a substrate binding site. Asp-179 functions as the Proton acceptor in the catalytic mechanism.

Belongs to the lysine N-acyltransferase MbtK family. In terms of assembly, monomer.

The protein operates within siderophore biosynthesis; mycobactin biosynthesis. In terms of biological role, acyltransferase required for the direct transfer of medium- to long-chain fatty acyl moieties from a carrier protein (MbtL) on to the epsilon-amino group of lysine residue in the mycobactin core. This chain is Lysine N-acyltransferase MbtK (mbtK), found in Mycolicibacterium paratuberculosis (strain ATCC BAA-968 / K-10) (Mycobacterium paratuberculosis).